A 306-amino-acid polypeptide reads, in one-letter code: Protein farnesyltransferase/geranylgeranyltransferase type-1 subunit alpha (306 aa).

PFTA repeat units follow at residues 48–82, 84–118, 125–159, 161–195, and 201–235; these read YSER…NLPN, NLYD…QIME, DPYR…TFDL, NDAK…SKKH, and TIDE…RFDR.

Belongs to the protein prenyltransferase subunit alpha family. Heterodimer of an alpha and a beta subunit. It depends on Mg(2+) as a cofactor.

It catalyses the reaction L-cysteinyl-[protein] + (2E,6E)-farnesyl diphosphate = S-(2E,6E)-farnesyl-L-cysteinyl-[protein] + diphosphate. The enzyme catalyses geranylgeranyl diphosphate + L-cysteinyl-[protein] = S-geranylgeranyl-L-cysteinyl-[protein] + diphosphate. In terms of biological role, essential subunit of both the farnesyltransferase and the geranylgeranyltransferase complex. Contributes to the transfer of a farnesyl or geranylgeranyl moiety from farnesyl or geranylgeranyl diphosphate to a cysteine at the fourth position from the C-terminus of several proteins having the C-terminal sequence Cys-aliphatic-aliphatic-X. In Candida albicans (Yeast), this protein is Protein farnesyltransferase/geranylgeranyltransferase type-1 subunit alpha (RAM2).